Consider the following 234-residue polypeptide: MLRIGYRGFSTRSRVFKLSPQEYVNQVQQEKIENEQFKQALSQDQLEYNPKILSSHKLTKNRPIPINVELLKYKPLRLPKTHGDEVATLTIRGYDEDNLIRVGEFALRTAYYMGIPMSPLMALKTEKRLYTVIKSPFAQAKTKQNFHRVTYKKKLVAYDANPEIIDLWLSYINKNKFTDVEYKATVSSYESLNYHEELKSLKEFNLPDAYEGIEDPVAKKVQELLKSKSFKKHL.

A mitochondrion-targeting transit peptide spans 1–23 (MLRIGYRGFSTRSRVFKLSPQEY).

This sequence belongs to the universal ribosomal protein uS10 family. Component of the mitochondrial small ribosomal subunit (mt-SSU).

It localises to the mitochondrion. In terms of biological role, component of the mitochondrial ribosome (mitoribosome), a dedicated translation machinery responsible for the synthesis of mitochondrial genome-encoded proteins, including at least some of the essential transmembrane subunits of the mitochondrial respiratory chain. The mitoribosomes are attached to the mitochondrial inner membrane and translation products are cotranslationally integrated into the membrane. The chain is Small ribosomal subunit protein uS10m (RSM10) from Candida albicans (strain SC5314 / ATCC MYA-2876) (Yeast).